Reading from the N-terminus, the 209-residue chain is Large ribosomal subunit protein uL3 (209 aa).

This sequence belongs to the universal ribosomal protein uL3 family. Part of the 50S ribosomal subunit. Forms a cluster with proteins L14 and L19.

Functionally, one of the primary rRNA binding proteins, it binds directly near the 3'-end of the 23S rRNA, where it nucleates assembly of the 50S subunit. This is Large ribosomal subunit protein uL3 from Oceanobacillus iheyensis (strain DSM 14371 / CIP 107618 / JCM 11309 / KCTC 3954 / HTE831).